An 816-amino-acid polypeptide reads, in one-letter code: Leucine--tRNA ligase (816 aa).

Residues 40–51 carry the 'HIGH' region motif; sequence SYPSGSQLHAGH. Residues 576-580 carry the 'KMSKS' region motif; that stretch reads KMSKS. Lys579 provides a ligand contact to ATP.

Belongs to the class-I aminoacyl-tRNA synthetase family.

The protein resides in the cytoplasm. The catalysed reaction is tRNA(Leu) + L-leucine + ATP = L-leucyl-tRNA(Leu) + AMP + diphosphate. The polypeptide is Leucine--tRNA ligase (Clostridium perfringens (strain SM101 / Type A)).